Reading from the N-terminus, the 333-residue chain is Protoheme IX farnesyltransferase (333 aa).

Helical transmembrane passes span leucine 64 to leucine 84, threonine 110 to valine 130, leucine 133 to leucine 153, isoleucine 161 to glycine 181, tryptophan 189 to leucine 209, isoleucine 246 to phenylalanine 266, and alanine 287 to isoleucine 307.

This sequence belongs to the UbiA prenyltransferase family. Protoheme IX farnesyltransferase subfamily.

It is found in the cell inner membrane. It carries out the reaction heme b + (2E,6E)-farnesyl diphosphate + H2O = Fe(II)-heme o + diphosphate. The protein operates within porphyrin-containing compound metabolism; heme O biosynthesis; heme O from protoheme: step 1/1. Converts heme B (protoheme IX) to heme O by substitution of the vinyl group on carbon 2 of heme B porphyrin ring with a hydroxyethyl farnesyl side group. The chain is Protoheme IX farnesyltransferase from Prochlorococcus marinus (strain MIT 9215).